Reading from the N-terminus, the 340-residue chain is UPF0324 membrane protein BC_5174 (340 aa).

The next 10 helical transmembrane spans lie at 13–35, 40–59, 99–118, 128–150, 157–179, 189–211, 218–240, 255–277, 279–301, and 316–338; these read FGFS…LAEL, IMGQ…AAIG, VLVI…YGLT, GILT…APQV, TAVG…TLLY, YGVF…APGG, AVIV…GLWF, LPIP…GIIP, VVAG…GLGL, and FVAG…YALG.

The protein belongs to the UPF0324 family.

The protein resides in the cell membrane. The chain is UPF0324 membrane protein BC_5174 from Bacillus cereus (strain ATCC 14579 / DSM 31 / CCUG 7414 / JCM 2152 / NBRC 15305 / NCIMB 9373 / NCTC 2599 / NRRL B-3711).